The chain runs to 250 residues: Adenosylcobinamide-GDP ribazoletransferase (250 aa).

Helical transmembrane passes span 32-52 (KGII…MVAY), 59-79 (LAHS…TGGL), 113-133 (GVLA…GLGE), 136-156 (IYWG…YGCY), 185-205 (LTFI…LLPI), and 230-250 (CELT…AGLF).

The protein belongs to the CobS family. Mg(2+) is required as a cofactor.

The protein resides in the cell membrane. The enzyme catalyses alpha-ribazole + adenosylcob(III)inamide-GDP = adenosylcob(III)alamin + GMP + H(+). The catalysed reaction is alpha-ribazole 5'-phosphate + adenosylcob(III)inamide-GDP = adenosylcob(III)alamin 5'-phosphate + GMP + H(+). The protein operates within cofactor biosynthesis; adenosylcobalamin biosynthesis; adenosylcobalamin from cob(II)yrinate a,c-diamide: step 7/7. Functionally, joins adenosylcobinamide-GDP and alpha-ribazole to generate adenosylcobalamin (Ado-cobalamin). Also synthesizes adenosylcobalamin 5'-phosphate from adenosylcobinamide-GDP and alpha-ribazole 5'-phosphate. This chain is Adenosylcobinamide-GDP ribazoletransferase, found in Alkaliphilus metalliredigens (strain QYMF).